Here is a 454-residue protein sequence, read N- to C-terminus: tRNA(Ile)-lysidine synthase (454 aa).

27 to 32 (SGGSDS) provides a ligand contact to ATP.

The protein belongs to the tRNA(Ile)-lysidine synthase family.

It localises to the cytoplasm. It catalyses the reaction cytidine(34) in tRNA(Ile2) + L-lysine + ATP = lysidine(34) in tRNA(Ile2) + AMP + diphosphate + H(+). In terms of biological role, ligates lysine onto the cytidine present at position 34 of the AUA codon-specific tRNA(Ile) that contains the anticodon CAU, in an ATP-dependent manner. Cytidine is converted to lysidine, thus changing the amino acid specificity of the tRNA from methionine to isoleucine. The sequence is that of tRNA(Ile)-lysidine synthase from Mesorhizobium japonicum (strain LMG 29417 / CECT 9101 / MAFF 303099) (Mesorhizobium loti (strain MAFF 303099)).